The sequence spans 1095 residues: SPAMPVPGPMGPMGPRGPPGSPGASGPQGFTGPPGEPGEAGSAGAMGPRGPAGPPGKNGEDGESGKPGRGGERGPPGPQGARGFSGLDGAKGDSGPAGPKGESGAPGENGTPGAMGPRGLPGERGRTGAAGAAGARGNDGAAGAAGPPGPTGPAGPPGFPGGPGAKGDAGAQGGRGPEGPAGARGEPGNPGPAGAAGPSGNPGTDGAAGPKGTPGAAGVAGAPGFPGPRGPSGPQGAAGAPGPKGNTGEVGAPGAKGEAGAKGEAGAPGVQGPPGPSGEEGKRGARGEPGAAGARGAPGERGGPGGRGFPGSDGPAGPKGATGERGAPGAVGPKGATGESGRTGEPGLPGAKGMTGSPGSPGPDGKTGPAGPSGQDGRPGPPGPVGARGQPGVMGFPGPKGAAGEGGKPGERGVMGPTGAAGAPGKDGDVGAPGPSGPAGPAGERGEQGPAGAPGFQGLPGPQGALGETGKPGEQGLPGEAGATGPAGARGDRGFPGERGAPGALGPAGARGSPGSXGNDGAKGDAGAPGAPGAQGPPGLQGMPGERGAAGLPGLRGDRGDQGAKGADGAPGKDGPRGLTGPLGLPGPAGATGDKGEPGPAGPVGPGGARGAPGERGESGPPGPAGFAGPPGADGQPGAKGEAGDNGAKGDAGPPGAAGPTGAPGPQGPVGNTGPKGARGAAGPPGATGFPGAAGRVGPPGPSGNPGPPGPAGGPGKEGPKGNRGETGPAGRTGEVGAAGPPGPAGEKSAGLPGPQGLAGQRGLPGQRGERGFPGLPGPAXEPGKPGPSGPGGERGPPGPMGPPGLAGAPGEPGREGSPGNEGSAGRDGAAGPKGDRGESGPSGAPGAPGPPGAPGPVGPAGKNGDRGETGPAGPAGSAGPAGPRGPAGALGLRGDKGESGEAGERGMKGHRGFTGMQGPPGPAGSSGEQGPAGAAGPAGPRGPAGSAGSPGKDGMSGLPGPTGPPGPRSGEMGPAGPPGPPGPPGAPGAPGGGFDLGFLSQPQEKAPDPYRMYDDANVLRDRDLEVDSTLKSLSQQLEQLRSPDGTRFTYSVLEDGCTSHTGTWGKLPLLDLAPMDVGAPDQEFGLEVGPVCFL.

Residues 1 to 21 (SPAMPVPGPMGPMGPRGPPGS) are compositionally biased toward pro residues. Residues 1 to 1011 (SPAMPVPGPM…QPQEKAPDPY (1011 aa)) form a disordered region. Over residues 22–49 (PGASGPQGFTGPPGEPGEAGSAGAMGPR) the composition is skewed to low complexity. Basic and acidic residues predominate over residues 58 to 72 (NGEDGESGKPGRGGE). Residues 127 to 145 (TGAAGAAGARGNDGAAGAA) are compositionally biased toward low complexity. Residues 147-160 (PPGPTGPAGPPGFP) are compositionally biased toward pro residues. The segment covering 161-179 (GGPGAKGDAGAQGGRGPEG) has biased composition (gly residues). 3 stretches are compositionally biased toward low complexity: residues 180–223 (PAGA…AGAP), 232–270 (SGPQ…APGV), and 288–297 (EPGAAGARGA). A compositionally biased stretch (gly residues) spans 299-311 (GERGGPGGRGFPG). Low complexity-rich tracts occupy residues 385-400 (VGAR…PGPK), 477-489 (LPGE…PAGA), 498-544 (ERGA…QGMP), and 577-592 (RGLT…AGAT). The segment covering 602 to 611 (GPVGPGGARG) has biased composition (gly residues). Composition is skewed to low complexity over residues 625 to 661 (AGFA…AGPT) and 675 to 697 (PKGA…AGRV). Residues 699-712 (PPGPSGNPGPPGPA) show a composition bias toward pro residues. Low complexity predominate over residues 804-822 (PGLAGAPGEPGREGSPGNE). Pro residues predominate over residues 848–858 (APGPPGAPGPV). The segment covering 872–893 (PAGPAGSAGPAGPRGPAGALGL) has biased composition (low complexity). Residues 894–908 (RGDKGESGEAGERGM) show a composition bias toward basic and acidic residues. A compositionally biased stretch (low complexity) spans 924-960 (AGSSGEQGPAGAAGPAGPRGPAGSAGSPGKDGMSGLP). The segment covering 976–988 (AGPPGPPGPPGAP) has biased composition (pro residues). Residues 1062–1095 (TGTWGKLPLLDLAPMDVGAPDQEFGLEVGPVCFL) form the Fibrillar collagen NC1 domain.

The protein belongs to the fibrillar collagen family.

It is found in the secreted. It localises to the extracellular space. The protein localises to the extracellular matrix. The polypeptide is Collagen, type I, alpha 1a (Epinephelus caninus (Dogtooth grouper)).